The sequence spans 426 residues: MGQTITEKIFSEHAGKKVHAGEIVRVDIDMIIGNDITTPISIRAFEESGAEKLARPDNFSIVMDHYIPAKDIASANQAKISREFAYKHDLKYFFDEKDMGIEHALLPEKGLVIPGDVIIGADSHTCTHGALGAFSTGMGSTDLAFGMITGGNWFKVPETIKVVLTGKSGEHIYGKDIILELIRILGVDGALYKALEFTGDAIQHLAMDDRFSMCNMAIEAGAKSGIIAVDNITEAYLIERAEANGGLRSEPKIHYSDEDATYCQVVTIDVENLSPVIAYPFLPSNGKPVEQAVKDDLKIDQVMIGSCTNGRIEDLRIAAEIMKGKRVAKHTRMIVTPATQKILMQAQHEGLMDILIEAGAVVSNPTCGACLGGYMGILGDGERCVATTNRNFVGRMGARTSEIYLANSAVAAASAIAGKIVDPREI.

The [4Fe-4S] cluster site is built by Cys307, Cys367, and Cys370.

It belongs to the aconitase/IPM isomerase family. LeuC type 2 subfamily. Heterodimer of LeuC and LeuD. Requires [4Fe-4S] cluster as cofactor.

The enzyme catalyses (2R,3S)-3-isopropylmalate = (2S)-2-isopropylmalate. The protein operates within amino-acid biosynthesis; L-leucine biosynthesis; L-leucine from 3-methyl-2-oxobutanoate: step 2/4. Functionally, catalyzes the isomerization between 2-isopropylmalate and 3-isopropylmalate, via the formation of 2-isopropylmaleate. This Sulfurovum sp. (strain NBC37-1) protein is 3-isopropylmalate dehydratase large subunit.